A 187-amino-acid chain; its full sequence is Elongation factor P (187 aa).

Belongs to the elongation factor P family.

It is found in the cytoplasm. It participates in protein biosynthesis; polypeptide chain elongation. Functionally, involved in peptide bond synthesis. Stimulates efficient translation and peptide-bond synthesis on native or reconstituted 70S ribosomes in vitro. Probably functions indirectly by altering the affinity of the ribosome for aminoacyl-tRNA, thus increasing their reactivity as acceptors for peptidyl transferase. This chain is Elongation factor P, found in Roseiflexus sp. (strain RS-1).